Here is a 338-residue protein sequence, read N- to C-terminus: CRISPR-associated endonuclease Cas1 (338 aa).

Residues glutamate 155, histidine 220, and glutamate 235 each coordinate Mn(2+).

Belongs to the CRISPR-associated endonuclease Cas1 family. Homodimer, forms a heterotetramer with a Cas2 homodimer. Mg(2+) is required as a cofactor. It depends on Mn(2+) as a cofactor.

In terms of biological role, CRISPR (clustered regularly interspaced short palindromic repeat), is an adaptive immune system that provides protection against mobile genetic elements (viruses, transposable elements and conjugative plasmids). CRISPR clusters contain spacers, sequences complementary to antecedent mobile elements, and target invading nucleic acids. CRISPR clusters are transcribed and processed into CRISPR RNA (crRNA). Acts as a dsDNA endonuclease. Involved in the integration of spacer DNA into the CRISPR cassette. The type III-A Csm effector complex binds crRNA and acts as a crRNA-guided RNase, DNase and cyclic oligoadenylate synthase; binding of target RNA cognate to the crRNA is required for all activities. The protein is CRISPR-associated endonuclease Cas1 of Mycobacterium tuberculosis (strain CDC 1551 / Oshkosh).